Reading from the N-terminus, the 397-residue chain is Pectate lyase 2 (397 aa).

An N-terminal signal peptide occupies residues 1-25; it reads MGIKQCCYILYFTLALVALLQPVRS. Asparagine 37 is a glycosylation site (N-linked (GlcNAc...) asparagine). An intrachain disulfide couples cysteine 54 to cysteine 71. Positions 194, 218, and 222 each coordinate Ca(2+). The active site involves arginine 274.

The protein belongs to the polysaccharide lyase 1 family. Amb a subfamily. In terms of assembly, monomer. Ca(2+) serves as cofactor. The N-terminus is blocked. Pollen and flowers.

It catalyses the reaction Eliminative cleavage of (1-&gt;4)-alpha-D-galacturonan to give oligosaccharides with 4-deoxy-alpha-D-galact-4-enuronosyl groups at their non-reducing ends.. The protein operates within glycan metabolism; pectin degradation; 2-dehydro-3-deoxy-D-gluconate from pectin: step 2/5. Functionally, has pectate lyase activity. In Ambrosia artemisiifolia (Common ragweed), this protein is Pectate lyase 2.